We begin with the raw amino-acid sequence, 71 residues long: uncharacterized protein (71 aa).

A signal peptide spans 1–21 (MGVGLHGDHVGGELNSANAFT).

This is an uncharacterized protein from Haemophilus influenzae (strain ATCC 51907 / DSM 11121 / KW20 / Rd).